The chain runs to 440 residues: Adenylosuccinate synthetase 1, chloroplastic (440 aa).

GTP-binding positions include 13–19 (GDEGKGK) and 41–43 (GHT). The active-site Proton acceptor is Asp14. 2 residues coordinate Mg(2+): Asp14 and Gly41. IMP-binding positions include 14–17 (DEGK), 39–42 (NAGH), Thr135, Arg149, Gln230, Thr245, and Arg313. His42 serves as the catalytic Proton donor. Residue 309–315 (TVTRRKR) participates in substrate binding. Residues Arg315 and 341 to 343 (KLD) contribute to the GTP site.

It belongs to the adenylosuccinate synthetase family. Homodimer. Mg(2+) serves as cofactor.

It localises to the plastid. The protein localises to the chloroplast. It catalyses the reaction IMP + L-aspartate + GTP = N(6)-(1,2-dicarboxyethyl)-AMP + GDP + phosphate + 2 H(+). It functions in the pathway purine metabolism; AMP biosynthesis via de novo pathway; AMP from IMP: step 1/2. Functionally, plays an important role in the de novo pathway and in the salvage pathway of purine nucleotide biosynthesis. Catalyzes the first committed step in the biosynthesis of AMP from IMP. The protein is Adenylosuccinate synthetase 1, chloroplastic of Ricinus communis (Castor bean).